We begin with the raw amino-acid sequence, 407 residues long: Aminomethyltransferase, mitochondrial (407 aa).

Residues 1–29 (MRGGLWQLGQSITRRLGQSDKKTIARRCY) constitute a mitochondrion transit peptide. The substrate site is built by Glu-234, Arg-265, and Tyr-403.

This sequence belongs to the GcvT family. The glycine cleavage system is composed of four proteins: P, T, L and H.

It localises to the mitochondrion. The enzyme catalyses N(6)-[(R)-S(8)-aminomethyldihydrolipoyl]-L-lysyl-[protein] + (6S)-5,6,7,8-tetrahydrofolate = N(6)-[(R)-dihydrolipoyl]-L-lysyl-[protein] + (6R)-5,10-methylene-5,6,7,8-tetrahydrofolate + NH4(+). The glycine cleavage system catalyzes the degradation of glycine. This Flaveria pringlei protein is Aminomethyltransferase, mitochondrial (GDCST).